Reading from the N-terminus, the 107-residue chain is uncharacterized protein (107 aa).

The disordered stretch occupies residues 86–107; that stretch reads KRAETARLPAATPQKRTGPARG.

This is an uncharacterized protein from Saccharomyces cerevisiae (strain ATCC 204508 / S288c) (Baker's yeast).